Reading from the N-terminus, the 358-residue chain is UPF0283 membrane protein PM0909 (358 aa).

3 helical membrane passes run 62-82 (LALT…QWLV), 90-110 (WIYF…VSSL), and 213-233 (ALEA…MFFL).

This sequence belongs to the UPF0283 family.

It localises to the cell inner membrane. This is UPF0283 membrane protein PM0909 from Pasteurella multocida (strain Pm70).